We begin with the raw amino-acid sequence, 263 residues long: uncharacterized protein (263 aa).

31–38 contributes to the ATP binding site; that stretch reads GPTGSGKT.

This sequence belongs to the CbbQ/NirQ/NorQ/GpvN family.

This is an uncharacterized protein from Staphylococcus saprophyticus subsp. saprophyticus (strain ATCC 15305 / DSM 20229 / NCIMB 8711 / NCTC 7292 / S-41).